Here is a 90-residue protein sequence, read N- to C-terminus: Putative large ribosomal subunit protein uL23c (90 aa).

The coded by first part of gene stretch occupies residues 1–46 (MDGIKYAVFTDKSIQLLGKKQYTSNVESRSTRTEIKHWVELWNSYE). The interval 47–90 (MNSHRLPGKGRRMGPIMGHTMHYRRMIITLQSSYSIPPLRKKRT) is coded by second part of gene.

The protein belongs to the universal ribosomal protein uL23 family. Part of the 50S ribosomal subunit.

Its subcellular location is the plastid. It localises to the chloroplast. Functionally, binds to 23S rRNA. The polypeptide is Putative large ribosomal subunit protein uL23c (rpl23) (Spinacia oleracea (Spinach)).